A 45-amino-acid chain; its full sequence is Iota-conotoxin-like R11.13 (45 aa).

Cystine bridges form between Cys5–Cys19, Cys12–Cys22, Cys18–Cys27, and Cys21–Cys36. At Leu43 the chain carries D-leucine. Arg45 is a propeptide (removed by a carboxypeptidase).

The protein belongs to the conotoxin I1 superfamily. In terms of tissue distribution, expressed by the venom duct.

It is found in the secreted. Functionally, iota-conotoxins bind to voltage-gated sodium channels (Nav) and act as agonists by shifting the voltage-dependence of activation to more hyperpolarized levels. Produces general excitatory symptoms. This chain is Iota-conotoxin-like R11.13, found in Conus radiatus (Rayed cone).